The sequence spans 479 residues: Probable periplasmic serine endoprotease DegP-like (479 aa).

The signal sequence occupies residues 1–27; that stretch reads MSMPSLKKYAAALFAVFLMGQSVAAHA. Residues His118, Asp148, and Ser221 each act as charge relay system in the active site. Residues 219–221 and 276–280 contribute to the substrate site; these read GNS and LGVVI. PDZ domains follow at residues 265 to 356 and 362 to 468; these read LKAS…VREG and KVAV…LRQG. The disordered stretch occupies residues 368–390; that stretch reads MPADDGDEATNDAAPSAERSSNR.

It belongs to the peptidase S1C family.

It localises to the periplasm. It catalyses the reaction Acts on substrates that are at least partially unfolded. The cleavage site P1 residue is normally between a pair of hydrophobic residues, such as Val-|-Val.. Its function is as follows. Might be efficient in the degradation of transiently denatured and unfolded proteins which accumulate in the periplasm following stress conditions. In Pseudomonas fulva (strain 12-X), this protein is Probable periplasmic serine endoprotease DegP-like.